The primary structure comprises 245 residues: Lytic switch protein BZLF1 (245 aa).

The tract at residues 1 to 167 (MMDPNSTSED…RTRKPLQPES (167 aa)) is transactivation. 2 positions are modified to phosphothreonine: Thr-14 and Thr-159. A disordered region spans residues 140-167 (QLADIGAPQPAPAAAPARRTRKPLQPES). The short motif at 157-194 (RRTRKPLQPESLEECDSELDIKRYKNRVASRKCRAKFK) is the Bipartite nuclear localization signal element. Ser-167, Ser-173, and Ser-186 each carry phosphoserine. Residues 178-195 (KRYKNRVASRKCRAKFKH) form a basic motif region. Positions 178–228 (KRYKNRVASRKCRAKFKHLLQHYREVASAKSSENDRLRLLLKQMCPSLDVD) constitute a bZIP domain. Positions 196–228 (LLQHYREVASAKSSENDRLRLLLKQMCPSLDVD) are leucine-zipper. The tract at residues 229–245 (SIIPRTPDVLHEDLLNF) is accessory activation domain.

The protein belongs to the bZIP family. As to quaternary structure, homodimer. Interacts (via b-ZIP domain) with the DNA polymerase processivity factor BMRF1 (via N-terminus); this interaction may inhibit BZLF1-induced transcription of the BMRF1 promoter. Interacts with human UBN1, CRTC2 and RACK1. Interacts (via N-terminus) with human PAX5 (via N-terminus); this interaction inhibits BZLF1-mediated lytic viral reactivation. Interacts (via leucine-zipper domain) with host CEBPA; this interaction induces G1 host cell cycle arrest. Interacts (via C-terminus) with host TP53BP1 (via C-terminus); this interaction is involved in the activation of the viral lytic cycle. Interacts with host chromatin-remodeling ATPase INO80; this interaction participates to the activation of early lytic viral genes by BZLF1. Interacts with host regulator of chromatin SMARCA5/hSNF2H; this interaction participates to the activation of early lytic viral genes by BZLF1. Interacts with host PLSCR1/Phospholipid scramblase 1; this interaction negatively regulates the transcriptional regulatory activity of BZLF1 by preventing the formation of the BZLF1-CBP complex.

The protein resides in the host nucleus. Its function is as follows. Transcription factor that acts as a molecular switch to induce the transition from the latent to the lytic or productive phase of the virus cycle. Mediates the switch from the latent to the lytic cycle of infection in cells containing a highly methylated viral genome. Probably binds to silenced chromatin and recruits host chromatin-remodeling enzymes. Regulates this switch by binding to 2 types of ZEBRA response elements (ZREs): the CpG-free AP-1 like elements (latency) and the methylated CpG-containing elements (lytic replication). Activates preferentially the methylated forms of the viral lytic R (BRLF1) and Na (BRRF1) gene promoters, the latters being the first genes activated during Z-mediated reactivation in latently infected cells. BZLF1 and BRLF1 act together to trigger lytic replication. Also binds the lytic origin of replication, oriLyt. Induces G1 cell cycle arrest by stabilizing the host CCAAT/enhancer binding protein CEBPA. This function is important because the lytic cycle preferentially takes place in host cells arrested in G1. In Epstein-Barr virus (strain AG876) (HHV-4), this protein is Lytic switch protein BZLF1.